The sequence spans 671 residues: DNA ligase (671 aa).

Residues 34–38 (DSEYD), 83–84 (SL), and Glu113 each bind NAD(+). Lys115 (N6-AMP-lysine intermediate) is an active-site residue. NAD(+) is bound by residues Arg136, Glu170, Lys286, and Lys310. The Zn(2+) site is built by Cys404, Cys407, Cys422, and Cys427. In terms of domain architecture, BRCT spans 590–671 (EEAGVFAGKT…FTQAVEQSEQ (82 aa)).

Belongs to the NAD-dependent DNA ligase family. LigA subfamily. Mg(2+) is required as a cofactor. Mn(2+) serves as cofactor.

It carries out the reaction NAD(+) + (deoxyribonucleotide)n-3'-hydroxyl + 5'-phospho-(deoxyribonucleotide)m = (deoxyribonucleotide)n+m + AMP + beta-nicotinamide D-nucleotide.. Its function is as follows. DNA ligase that catalyzes the formation of phosphodiester linkages between 5'-phosphoryl and 3'-hydroxyl groups in double-stranded DNA using NAD as a coenzyme and as the energy source for the reaction. It is essential for DNA replication and repair of damaged DNA. This Shouchella clausii (strain KSM-K16) (Alkalihalobacillus clausii) protein is DNA ligase.